The sequence spans 278 residues: Elongation factor Ts (278 aa).

Residues 82–85 form an involved in Mg(2+) ion dislocation from EF-Tu region; that stretch reads TDFV.

Belongs to the EF-Ts family.

Its subcellular location is the cytoplasm. In terms of biological role, associates with the EF-Tu.GDP complex and induces the exchange of GDP to GTP. It remains bound to the aminoacyl-tRNA.EF-Tu.GTP complex up to the GTP hydrolysis stage on the ribosome. This chain is Elongation factor Ts, found in Streptomyces griseus subsp. griseus (strain JCM 4626 / CBS 651.72 / NBRC 13350 / KCC S-0626 / ISP 5235).